A 172-amino-acid chain; its full sequence is MAPFNMDIPTLAIPGDRNQSQAIELSQQAQQPQQPQQSQQAYTGHLQRKQADEGSAEYYFDKGCEWMGNHPWMTGMGVLGVAYFASGFVKSKQPGINGKAFVKGPFGQKMTPKEALQILNLKETNLSQAKLKEQHRKLMMANHPDKGGSSYLATKVNEAKDILEKRGGLKKK.

The segment at 1-48 (MAPFNMDIPTLAIPGDRNQSQAIELSQQAQQPQQPQQSQQAYTGHLQR) is disordered. Topologically, residues 1–71 (MAPFNMDIPT…KGCEWMGNHP (71 aa)) are mitochondrial intermembrane. Residues 26-41 (SQQAQQPQQPQQSQQA) show a composition bias toward low complexity. Residues 72–89 (WMTGMGVLGVAYFASGFV) form a helical membrane-spanning segment. The Mitochondrial matrix portion of the chain corresponds to 90–172 (KSKQPGINGK…LEKRGGLKKK (83 aa)). The region spanning 114–172 (EALQILNLKETNLSQAKLKEQHRKLMMANHPDKGGSSYLATKVNEAKDILEKRGGLKKK) is the J domain.

This sequence belongs to the TIM14 family. In terms of assembly, heterodimer with PAM16. Component of the PAM complex, at least composed of mtHsp70, MGE1, TIM44, PAM16, PAM17 and PAM18.

It is found in the mitochondrion inner membrane. Its function is as follows. Essential component of the PAM complex, a complex required for the translocation of transit peptide-containing proteins from the inner membrane into the mitochondrial matrix in an ATP-dependent manner. In the complex, it is required to stimulate activity of mtHSP70 (SSC1). The sequence is that of Mitochondrial import inner membrane translocase subunit TIM14 (PAM18) from Debaryomyces hansenii (strain ATCC 36239 / CBS 767 / BCRC 21394 / JCM 1990 / NBRC 0083 / IGC 2968) (Yeast).